The following is a 556-amino-acid chain: 2-isopropylmalate synthase (556 aa).

Residues 33–307 (PIWLSSDLRD…DPQLDFSDID (275 aa)) enclose the Pyruvate carboxyltransferase domain. Mg(2+)-binding residues include aspartate 42, histidine 246, histidine 248, and asparagine 282. The interval 439–556 (ATAPYTLKGH…ALHQAQEAAA (118 aa)) is regulatory domain.

It belongs to the alpha-IPM synthase/homocitrate synthase family. LeuA type 2 subfamily. Homodimer. Mg(2+) is required as a cofactor.

The protein resides in the cytoplasm. It catalyses the reaction 3-methyl-2-oxobutanoate + acetyl-CoA + H2O = (2S)-2-isopropylmalate + CoA + H(+). The protein operates within amino-acid biosynthesis; L-leucine biosynthesis; L-leucine from 3-methyl-2-oxobutanoate: step 1/4. Catalyzes the condensation of the acetyl group of acetyl-CoA with 3-methyl-2-oxobutanoate (2-ketoisovalerate) to form 3-carboxy-3-hydroxy-4-methylpentanoate (2-isopropylmalate). The chain is 2-isopropylmalate synthase from Stutzerimonas stutzeri (strain A1501) (Pseudomonas stutzeri).